A 417-amino-acid chain; its full sequence is Serine protease hepsin (417 aa).

The Cytoplasmic segment spans residues 1 to 23; that stretch reads MAQKEGGRTVPCCSRPKVAALTA. Residues 24 to 44 traverse the membrane as a helical; Signal-anchor for type II membrane protein segment; sequence GTLLLLTAIGAASWAIVAVLL. The Extracellular segment spans residues 45-417; the sequence is RSDQEPLYPV…SEASGMVTQL (373 aa). The region spanning 54 to 151 is the SRCR domain; sequence VQVSSADARL…RGRFLATICQ (98 aa). 8 disulfides stabilise this stretch: Cys-77–Cys-140, Cys-90–Cys-150, Cys-119–Cys-138, Cys-153–Cys-277, Cys-188–Cys-204, Cys-291–Cys-359, Cys-322–Cys-338, and Cys-349–Cys-381. N-linked (GlcNAc...) asparagine glycosylation is present at Asn-112. The region spanning 163–405 is the Peptidase S1 domain; the sequence is IVGGRDTSLG…FREWIFQAIK (243 aa). Catalysis depends on charge relay system residues His-203 and Asp-257. Ser-353 (charge relay system) is an active-site residue.

This sequence belongs to the peptidase S1 family.

It is found in the membrane. It catalyses the reaction Cleavage after basic amino-acid residues, with Arg strongly preferred to Lys.. Its function is as follows. Plays an essential role in cell growth and maintenance of cell morphology. May mediate the activating cleavage of HGF and MST1/HGFL. Plays a role in the proteolytic processing of ACE2. The polypeptide is Serine protease hepsin (HPN) (Pongo abelii (Sumatran orangutan)).